The following is a 173-amino-acid chain: NADH-ubiquinone oxidoreductase chain 6 (173 aa).

4 helical membrane-spanning segments follow: residues 12–32, 47–67, 94–114, and 142–162; these read VFWLIGVSSNISVYYGVVSLV, GSFLALVLFLIYLGGMLVIFA, VVLAVVFVLVGWGWWGVGECG, and GALMMAMFGLFLTFFIVLVLV.

This sequence belongs to the complex I subunit 6 family.

It is found in the mitochondrion membrane. It catalyses the reaction a ubiquinone + NADH + 5 H(+)(in) = a ubiquinol + NAD(+) + 4 H(+)(out). Core subunit of the mitochondrial membrane respiratory chain NADH dehydrogenase (Complex I) that is believed to belong to the minimal assembly required for catalysis. Complex I functions in the transfer of electrons from NADH to the respiratory chain. The immediate electron acceptor for the enzyme is believed to be ubiquinone. The protein is NADH-ubiquinone oxidoreductase chain 6 (MT-ND6) of Pelomedusa subrufa (African side-necked turtle).